A 205-amino-acid polypeptide reads, in one-letter code: Peptidyl-tRNA hydrolase (205 aa).

Tyr14 contributes to the tRNA binding site. His19 acts as the Proton acceptor in catalysis. Residues Tyr64, Asn66, and Asn112 each contribute to the tRNA site.

Belongs to the PTH family. As to quaternary structure, monomer.

Its subcellular location is the cytoplasm. It carries out the reaction an N-acyl-L-alpha-aminoacyl-tRNA + H2O = an N-acyl-L-amino acid + a tRNA + H(+). Hydrolyzes ribosome-free peptidyl-tRNAs (with 1 or more amino acids incorporated), which drop off the ribosome during protein synthesis, or as a result of ribosome stalling. Its function is as follows. Catalyzes the release of premature peptidyl moieties from peptidyl-tRNA molecules trapped in stalled 50S ribosomal subunits, and thus maintains levels of free tRNAs and 50S ribosomes. The polypeptide is Peptidyl-tRNA hydrolase (Parvibaculum lavamentivorans (strain DS-1 / DSM 13023 / NCIMB 13966)).